The following is a 124-amino-acid chain: Small ribosomal subunit protein uS12 (124 aa).

Aspartate 89 carries the 3-methylthioaspartic acid modification. The interval 105–124 is disordered; that stretch reads SGVSDRRQGRSKYGAKRPKS. The segment covering 113–124 has biased composition (basic residues); that stretch reads GRSKYGAKRPKS.

This sequence belongs to the universal ribosomal protein uS12 family. As to quaternary structure, part of the 30S ribosomal subunit. Contacts proteins S8 and S17. May interact with IF1 in the 30S initiation complex.

With S4 and S5 plays an important role in translational accuracy. Its function is as follows. Interacts with and stabilizes bases of the 16S rRNA that are involved in tRNA selection in the A site and with the mRNA backbone. Located at the interface of the 30S and 50S subunits, it traverses the body of the 30S subunit contacting proteins on the other side and probably holding the rRNA structure together. The combined cluster of proteins S8, S12 and S17 appears to hold together the shoulder and platform of the 30S subunit. In Colwellia psychrerythraea (strain 34H / ATCC BAA-681) (Vibrio psychroerythus), this protein is Small ribosomal subunit protein uS12.